Consider the following 360-residue polypeptide: Phospho-N-acetylmuramoyl-pentapeptide-transferase (360 aa).

10 helical membrane-spanning segments follow: residues 25-45 (RAIL…PWVI), 74-94 (MGGA…SDFG), 97-117 (YVWV…VDDY), 134-154 (YFWQ…TAQA), 168-188 (VALN…VGTS), 199-219 (GLAI…AYLA), 236-256 (AGEL…FLWF), 263-283 (VFMG…VAVI), 288-308 (FVLF…ILQV), and 339-359 (IVRF…TLKF).

Belongs to the glycosyltransferase 4 family. MraY subfamily. Mg(2+) serves as cofactor.

It is found in the cell inner membrane. It carries out the reaction UDP-N-acetyl-alpha-D-muramoyl-L-alanyl-gamma-D-glutamyl-meso-2,6-diaminopimeloyl-D-alanyl-D-alanine + di-trans,octa-cis-undecaprenyl phosphate = di-trans,octa-cis-undecaprenyl diphospho-N-acetyl-alpha-D-muramoyl-L-alanyl-D-glutamyl-meso-2,6-diaminopimeloyl-D-alanyl-D-alanine + UMP. It participates in cell wall biogenesis; peptidoglycan biosynthesis. In terms of biological role, catalyzes the initial step of the lipid cycle reactions in the biosynthesis of the cell wall peptidoglycan: transfers peptidoglycan precursor phospho-MurNAc-pentapeptide from UDP-MurNAc-pentapeptide onto the lipid carrier undecaprenyl phosphate, yielding undecaprenyl-pyrophosphoryl-MurNAc-pentapeptide, known as lipid I. The polypeptide is Phospho-N-acetylmuramoyl-pentapeptide-transferase (Cellvibrio japonicus (strain Ueda107) (Pseudomonas fluorescens subsp. cellulosa)).